The following is a 380-amino-acid chain: 1-deoxy-D-xylulose 5-phosphate reductoisomerase (380 aa).

NADPH is bound by residues Thr10, Gly11, Ser12, Ile13, Gly36, Arg37, Asn38, and Asn120. Lys121 contacts 1-deoxy-D-xylulose 5-phosphate. Residue Glu122 participates in NADPH binding. Asp146 lines the Mn(2+) pocket. The 1-deoxy-D-xylulose 5-phosphate site is built by Ser147, Glu148, Ser172, and His195. Glu148 is a binding site for Mn(2+). Gly201 is an NADPH binding site. 1-deoxy-D-xylulose 5-phosphate is bound by residues Ser208, Asn213, Lys214, and Glu217. Glu217 serves as a coordination point for Mn(2+).

The protein belongs to the DXR family. Mg(2+) is required as a cofactor. Requires Mn(2+) as cofactor.

The enzyme catalyses 2-C-methyl-D-erythritol 4-phosphate + NADP(+) = 1-deoxy-D-xylulose 5-phosphate + NADPH + H(+). The protein operates within isoprenoid biosynthesis; isopentenyl diphosphate biosynthesis via DXP pathway; isopentenyl diphosphate from 1-deoxy-D-xylulose 5-phosphate: step 1/6. Functionally, catalyzes the NADPH-dependent rearrangement and reduction of 1-deoxy-D-xylulose-5-phosphate (DXP) to 2-C-methyl-D-erythritol 4-phosphate (MEP). The sequence is that of 1-deoxy-D-xylulose 5-phosphate reductoisomerase from Listeria monocytogenes serotype 4b (strain F2365).